Here is a 984-residue protein sequence, read N- to C-terminus: Pre-mRNA-splicing factor cwf10 (984 aa).

A disordered region spans residues 1–28 (MMEEDLYDEFGNYIGPENEEDEEELFPQ). The region spanning 139-402 (DDVRSFIVAG…HTLTISDEAE (264 aa)) is the tr-type G domain. The interval 148–155 (GHLHHGKS) is G1. 148–155 (GHLHHGKS) is a GTP binding site. A G2 region spans residues 190–194 (VMSIK). The interval 216–219 (DTPG) is G3. GTP contacts are provided by residues 216 to 220 (DTPGH) and 270 to 273 (NKVD). The segment at 270-273 (NKVD) is G4. The segment at 371 to 373 (QSL) is G5.

Belongs to the TRAFAC class translation factor GTPase superfamily. Classic translation factor GTPase family. EF-G/EF-2 subfamily. Belongs to the 40S cdc5-associated complex (or cwf complex), a spliceosome sub-complex reminiscent of a late-stage spliceosome composed of the U2, U5 and U6 snRNAs and at least brr2, cdc5, cwf2/prp3, cwf3/syf1, cwf4/syf3, cwf5/ecm2, spp42/cwf6, cwf7/spf27, cwf8, cwf9, cwf10, cwf11, cwf12, prp45/cwf13, cwf14, cwf15, cwf16, cwf17, cwf18, cwf19, cwf20, cwf21, cwf22, cwf23, cwf24, cwf25, cwf26, cyp7/cwf27, cwf28, cwf29/ist3, lea1, msl1, prp5/cwf1, prp10, prp12/sap130, prp17, prp22, sap61, sap62, sap114, sap145, slu7, smb1, smd1, smd3, smf1, smg1 and syf2.

It localises to the cytoplasm. It is found in the nucleus. Functionally, component of the U5 snRNP complex required for pre-mRNA splicing. Binds GTP. This chain is Pre-mRNA-splicing factor cwf10 (cwf10), found in Schizosaccharomyces pombe (strain 972 / ATCC 24843) (Fission yeast).